We begin with the raw amino-acid sequence, 419 residues long: L-rhamnose isomerase (419 aa).

Mn(2+) contacts are provided by His-262, Asp-294, and Asp-296.

It belongs to the rhamnose isomerase family. In terms of assembly, homotetramer. Requires Mn(2+) as cofactor.

Its subcellular location is the cytoplasm. It carries out the reaction L-rhamnopyranose = L-rhamnulose. It functions in the pathway carbohydrate degradation; L-rhamnose degradation; glycerone phosphate from L-rhamnose: step 1/3. Catalyzes the interconversion of L-rhamnose and L-rhamnulose. In Salmonella paratyphi A (strain AKU_12601), this protein is L-rhamnose isomerase.